A 204-amino-acid polypeptide reads, in one-letter code: MNAPRPHDLLWGMPVSALPADAPQWALDVLAGAQPVVVRRAICDHGWVAVGLRGQGRTQRFAALMRLVDIQRQQGPEALRGPGQSPWPALQALASVAPVLNASGLAWGPTGGAGYQIATGIEVLHTGSDLDLLLHTPQPLARAQARELLDILDCAPCRIDVQLETPAGAVALREWAGFARRVLLKSDHGPRLVGDPWAAQERAA.

Catalysis depends on residues D129 and D131.

It belongs to the MdcG family.

The enzyme catalyses apo-[malonate decarboxylase ACP] + 2'-(5''-triphospho-alpha-D-ribosyl)-3'-dephospho-CoA = holo-[malonate decarboxylase ACP] + diphosphate. Its function is as follows. Transfers 2'-(5-triphosphoribosyl)-3'-dephosphocoenzyme-A to the apo-[acyl-carrier-protein] of the malonate decarboxylase to yield holo-[acyl-carrier-protein]. The polypeptide is Phosphoribosyl-dephospho-CoA transferase (Pseudomonas putida (strain GB-1)).